A 263-amino-acid chain; its full sequence is 3-deoxy-manno-octulosonate cytidylyltransferase (263 aa).

Belongs to the KdsB family.

The protein localises to the cytoplasm. The catalysed reaction is 3-deoxy-alpha-D-manno-oct-2-ulosonate + CTP = CMP-3-deoxy-beta-D-manno-octulosonate + diphosphate. It participates in nucleotide-sugar biosynthesis; CMP-3-deoxy-D-manno-octulosonate biosynthesis; CMP-3-deoxy-D-manno-octulosonate from 3-deoxy-D-manno-octulosonate and CTP: step 1/1. The protein operates within bacterial outer membrane biogenesis; lipopolysaccharide biosynthesis. Activates KDO (a required 8-carbon sugar) for incorporation into bacterial lipopolysaccharide in Gram-negative bacteria. The protein is 3-deoxy-manno-octulosonate cytidylyltransferase of Burkholderia thailandensis (strain ATCC 700388 / DSM 13276 / CCUG 48851 / CIP 106301 / E264).